Consider the following 346-residue polypeptide: N-acetyl-gamma-glutamyl-phosphate reductase (346 aa).

Residue Cys149 is part of the active site.

It belongs to the NAGSA dehydrogenase family. Type 1 subfamily.

It is found in the cytoplasm. The catalysed reaction is N-acetyl-L-glutamate 5-semialdehyde + phosphate + NADP(+) = N-acetyl-L-glutamyl 5-phosphate + NADPH + H(+). The protein operates within amino-acid biosynthesis; L-arginine biosynthesis; N(2)-acetyl-L-ornithine from L-glutamate: step 3/4. Functionally, catalyzes the NADPH-dependent reduction of N-acetyl-5-glutamyl phosphate to yield N-acetyl-L-glutamate 5-semialdehyde. This Geotalea daltonii (strain DSM 22248 / JCM 15807 / FRC-32) (Geobacter daltonii) protein is N-acetyl-gamma-glutamyl-phosphate reductase.